We begin with the raw amino-acid sequence, 466 residues long: Asparagine--tRNA ligase (466 aa).

It belongs to the class-II aminoacyl-tRNA synthetase family. As to quaternary structure, homodimer.

It is found in the cytoplasm. It carries out the reaction tRNA(Asn) + L-asparagine + ATP = L-asparaginyl-tRNA(Asn) + AMP + diphosphate + H(+). The sequence is that of Asparagine--tRNA ligase from Idiomarina loihiensis (strain ATCC BAA-735 / DSM 15497 / L2-TR).